The primary structure comprises 465 residues: VGFKAGVKDYKLTYYTPDYETKDTDILAAFRVTPQPGVPPEEAGAAVAAESSTGTWTTVWTDGLTSLDRYKGRCYHIEPVAGEENQFIAYVAYPLDLFEEGSVTNMFTSIVGNVFGFKALRALRLEDLRIPPAYSKTFQGPPHGIQVERDKLNKYGRPLLGCTIKPKLGLSAKNYGRAVYECLRGGLDFTKDDENVNSQPFMRWRDRFLFCAEAIYKAQAETGEIKGHYLNATAGTCEEMMKRAVFARELGVPIVMHDYLTGGFTANTSLAQYCRDNGLLLHIHRAMHAVIDRQKNHGMHFRVLAKALRMSGGDHIHAGTVVGKLEGEREITLGFVDLLRDDFIEKDRSRGIYFTQDWVSLPGVIPVASGGIHVWHMPALTEIFGDDSVLQFGGGTLGHPWGNAPGAVANRVALEACVQARNEGRDLAREGNEIIREASKWSPELAAACEVWKEIKFEFPAMDTL.

N6,N6,N6-trimethyllysine is present on lysine 4. Substrate contacts are provided by asparagine 113 and threonine 163. The active-site Proton acceptor is the lysine 165. Lysine 167 serves as a coordination point for substrate. Lysine 191, aspartate 193, and glutamate 194 together coordinate Mg(2+). Position 191 is an N6-carboxylysine (lysine 191). Histidine 284 functions as the Proton acceptor in the catalytic mechanism. Substrate-binding residues include arginine 285, histidine 317, and serine 369.

It belongs to the RuBisCO large chain family. Type I subfamily. As to quaternary structure, heterohexadecamer of 8 large chains and 8 small chains; disulfide-linked. The disulfide link is formed within the large subunit homodimers. Mg(2+) is required as a cofactor. Post-translationally, the disulfide bond which can form in the large chain dimeric partners within the hexadecamer appears to be associated with oxidative stress and protein turnover.

The protein localises to the plastid. Its subcellular location is the chloroplast. The enzyme catalyses 2 (2R)-3-phosphoglycerate + 2 H(+) = D-ribulose 1,5-bisphosphate + CO2 + H2O. It carries out the reaction D-ribulose 1,5-bisphosphate + O2 = 2-phosphoglycolate + (2R)-3-phosphoglycerate + 2 H(+). Functionally, ruBisCO catalyzes two reactions: the carboxylation of D-ribulose 1,5-bisphosphate, the primary event in carbon dioxide fixation, as well as the oxidative fragmentation of the pentose substrate in the photorespiration process. Both reactions occur simultaneously and in competition at the same active site. The polypeptide is Ribulose bisphosphate carboxylase large chain (Byrsonima crassifolia (Cajuil cimarron)).